We begin with the raw amino-acid sequence, 109 residues long: Sperm-specific class P protein 16 (109 aa).

The MSP domain maps to 2–109; the sequence is SLTADPPACT…TVTIPMSATA (108 aa).

Expressed at higher level in testis.

The protein is Sperm-specific class P protein 16 (ssp-16) of Caenorhabditis elegans.